The sequence spans 452 residues: COP9 signalosome complex subunit 11 (452 aa).

In terms of domain architecture, PCI spans phenylalanine 205 to aspartate 374.

In terms of assembly, component of a COP9 signalosome-like (CSN) complex.

The protein resides in the cytoplasm. The protein localises to the nucleus. Functionally, component of the COP9 signalosome (CSN) complex that acts as an regulator of the ubiquitin (Ubl) conjugation pathway by mediating the deneddylation of the cullin subunit of SCF-type E3 ubiquitin-protein ligase complexes The CSN complex is involved in the regulation of the mating pheromone response. PCI8 may also be involved in transcriptional and translational control. This Candida glabrata (strain ATCC 2001 / BCRC 20586 / JCM 3761 / NBRC 0622 / NRRL Y-65 / CBS 138) (Yeast) protein is COP9 signalosome complex subunit 11 (PCI8).